The primary structure comprises 56 residues: Large ribosomal subunit protein bL33A (56 aa).

It belongs to the bacterial ribosomal protein bL33 family.

In Sorangium cellulosum (strain So ce56) (Polyangium cellulosum (strain So ce56)), this protein is Large ribosomal subunit protein bL33A.